A 545-amino-acid chain; its full sequence is Glucose-6-phosphate isomerase (545 aa).

The active-site Proton donor is Glu351. Residues His382 and Lys510 contribute to the active site.

Belongs to the GPI family.

It localises to the cytoplasm. It carries out the reaction alpha-D-glucose 6-phosphate = beta-D-fructose 6-phosphate. It participates in carbohydrate biosynthesis; gluconeogenesis. The protein operates within carbohydrate degradation; glycolysis; D-glyceraldehyde 3-phosphate and glycerone phosphate from D-glucose: step 2/4. In terms of biological role, catalyzes the reversible isomerization of glucose-6-phosphate to fructose-6-phosphate. This chain is Glucose-6-phosphate isomerase, found in Shewanella loihica (strain ATCC BAA-1088 / PV-4).